Consider the following 457-residue polypeptide: Interferon regulatory factor 7 (457 aa).

The IRF tryptophan pentad repeat DNA-binding region spans 9–126 (RVLFGDWLLG…DPHKVYELSR (118 aa)). An N6-acetyllysine; by KAT2A and KAT2B modification is found at K92. Residues 238–410 (RSLGFLDVTI…TLILVKLEPW (173 aa)) form a necessary for the interaction with NMI region. A Glycyl lysine isopeptide (Lys-Gly) (interchain with G-Cter in ubiquitin) cross-link involves residue K329. Glycyl lysine isopeptide (Lys-Gly) (interchain with G-Cter in SUMO) cross-links involve residues K398 and K400. A phosphoserine mark is found at S425, S426, and S429. At S431 the chain carries Phosphoserine; by TBK1 and IKKE. S437, S438, and S441 each carry phosphoserine.

The protein belongs to the IRF family. Monomer. Homodimer; phosphorylation-induced. Heterodimer with IRF3. Interacts with TICAM1 and TICAM2. Interacts with MYD88 and TRAF6. Interacts with NMI; the interaction is direct and leads to the inhibition of IRF7-mediated type I IFN production. Interacts with GBP4; preventing interaction between TRAF6 and IRF7, resulting in impaired TRAF6-mediated IRF7 ubiquitination. Interacts with TARBP2; this interaction prevents IRF7 phosphorylation and activation. Acetylation inhibits its DNA-binding ability and activity. Post-translationally, in response to a viral infection, phosphorylated by TBK1 and IKBKE1. Phosphorylation, and subsequent activation is inhibited by vaccinia virus protein E3. In TLR7- and TLR9-mediated signaling pathway, phosphorylated by IRAK1. In terms of processing, TRAF6-mediated ubiquitination is required for IRF7 activation. TRIM35 mediates IRF7 'Lys-48'-linked polyubiquitination and subsequent proteasomal degradation. 'Lys-48'-linked polyubiquitination and subsequent proteasomal degradation is NMI-dependent in response to Sendai virus infection. Ubiquitinated by UBE3C, leading to its degradation. Sumoylated by TRIM28, which inhibits its transactivation activity. Post-translationally, 'Lys-63'-linked ubiquitination by NEURL3 promotes IRF7 activation.

Its subcellular location is the nucleus. The protein localises to the cytoplasm. In the absence of viral infection, maintained as a monomer in an autoinhibited state and phosphorylation disrupts this autoinhibition leading to the liberation of the DNA-binding and dimerization activities and its nuclear localization where it can activate type I IFN and ISG genes. Key transcriptional regulator of type I interferon (IFN)-dependent immune responses and plays a critical role in the innate immune response against DNA and RNA viruses. Regulates the transcription of type I IFN genes (IFN-alpha and IFN-beta) and IFN-stimulated genes (ISG) by binding to an interferon-stimulated response element (ISRE) in their promoters. Can efficiently activate both the IFN-beta (IFNB) and the IFN-alpha (IFNA) genes and mediate their induction via both the virus-activated, MyD88-independent pathway and the TLR-activated, MyD88-dependent pathway. Induces transcription of ubiquitin hydrolase USP25 mRNA in response to lipopolysaccharide (LPS) or viral infection in a type I IFN-dependent manner. Required during both the early and late phases of the IFN gene induction but is more critical for the late than for the early phase. Exists in an inactive form in the cytoplasm of uninfected cells and following viral infection, double-stranded RNA (dsRNA), or toll-like receptor (TLR) signaling, becomes phosphorylated by IKBKE and TBK1 kinases. This induces a conformational change, leading to its dimerization and nuclear localization where along with other coactivators it can activate transcription of the type I IFN and ISG genes. Can also play a role in regulating adaptive immune responses by inducing PSMB9/LMP2 expression, either directly or through induction of IRF1. Binds to the Q promoter (Qp) of EBV nuclear antigen 1 a (EBNA1) and may play a role in the regulation of EBV latency. Can activate distinct gene expression programs in macrophages and regulate the anti-tumor properties of primary macrophages. The protein is Interferon regulatory factor 7 (Irf7) of Mus musculus (Mouse).